Consider the following 114-residue polypeptide: Hydrogenase maturation factor HypA (114 aa).

His2 is a binding site for Ni(2+). Positions 73, 76, 90, and 93 each coordinate Zn(2+).

This sequence belongs to the HypA/HybF family.

Functionally, involved in the maturation of [NiFe] hydrogenases. Required for nickel insertion into the metal center of the hydrogenase. The sequence is that of Hydrogenase maturation factor HypA from Chloroflexus aurantiacus (strain ATCC 29366 / DSM 635 / J-10-fl).